Consider the following 357-residue polypeptide: Anthranilate phosphoribosyltransferase (357 aa).

5-phospho-alpha-D-ribose 1-diphosphate contacts are provided by residues G91, 94-95, T99, 101-104, 119-127, and S131; these read GD, NIST, and KHGNRSVSS. G91 lines the anthranilate pocket. Residue S103 participates in Mg(2+) binding. Position 122 (N122) interacts with anthranilate. Anthranilate is bound at residue R177. Residues D235 and E236 each contribute to the Mg(2+) site.

The protein belongs to the anthranilate phosphoribosyltransferase family. In terms of assembly, homodimer. The cofactor is Mg(2+).

The enzyme catalyses N-(5-phospho-beta-D-ribosyl)anthranilate + diphosphate = 5-phospho-alpha-D-ribose 1-diphosphate + anthranilate. Its pathway is amino-acid biosynthesis; L-tryptophan biosynthesis; L-tryptophan from chorismate: step 2/5. Catalyzes the transfer of the phosphoribosyl group of 5-phosphorylribose-1-pyrophosphate (PRPP) to anthranilate to yield N-(5'-phosphoribosyl)-anthranilate (PRA). The polypeptide is Anthranilate phosphoribosyltransferase (Shewanella baltica (strain OS155 / ATCC BAA-1091)).